The primary structure comprises 444 residues: Homogentisate 1,2-dioxygenase (444 aa).

Residue histidine 298 is the Proton acceptor of the active site. Residues histidine 341 and glutamate 347 each coordinate Fe cation. Residues tyrosine 356 and histidine 377 each contribute to the homogentisate site. Residue histidine 377 participates in Fe cation binding.

The protein belongs to the homogentisate dioxygenase family. As to quaternary structure, hexamer; dimer of trimers. Fe cation serves as cofactor.

The catalysed reaction is homogentisate + O2 = 4-maleylacetoacetate + H(+). It functions in the pathway amino-acid degradation; L-phenylalanine degradation; acetoacetate and fumarate from L-phenylalanine: step 4/6. In terms of biological role, involved in the catabolism of homogentisate (2,5-dihydroxyphenylacetate or 2,5-OH-PhAc), a central intermediate in the degradation of phenylalanine and tyrosine. Catalyzes the oxidative ring cleavage of the aromatic ring of homogentisate to yield maleylacetoacetate. The sequence is that of Homogentisate 1,2-dioxygenase from Burkholderia lata (strain ATCC 17760 / DSM 23089 / LMG 22485 / NCIMB 9086 / R18194 / 383).